Consider the following 341-residue polypeptide: Anthranilate phosphoribosyltransferase (341 aa).

5-phospho-alpha-D-ribose 1-diphosphate is bound by residues Gly79, 82-83, Thr87, 89-92, 107-115, and Ala119; these read GD, NIST, and KHGNRAASS. Gly79 serves as a coordination point for anthranilate. A Mg(2+)-binding site is contributed by Ser91. Residue Asn110 participates in anthranilate binding. Arg165 serves as a coordination point for anthranilate. Asp224 and Glu225 together coordinate Mg(2+).

The protein belongs to the anthranilate phosphoribosyltransferase family. As to quaternary structure, homodimer. Mg(2+) serves as cofactor.

It catalyses the reaction N-(5-phospho-beta-D-ribosyl)anthranilate + diphosphate = 5-phospho-alpha-D-ribose 1-diphosphate + anthranilate. It functions in the pathway amino-acid biosynthesis; L-tryptophan biosynthesis; L-tryptophan from chorismate: step 2/5. Catalyzes the transfer of the phosphoribosyl group of 5-phosphorylribose-1-pyrophosphate (PRPP) to anthranilate to yield N-(5'-phosphoribosyl)-anthranilate (PRA). This is Anthranilate phosphoribosyltransferase from Lacticaseibacillus paracasei (strain ATCC 334 / BCRC 17002 / CCUG 31169 / CIP 107868 / KCTC 3260 / NRRL B-441) (Lactobacillus paracasei).